Consider the following 391-residue polypeptide: Formate-dependent phosphoribosylglycinamide formyltransferase (391 aa).

N(1)-(5-phospho-beta-D-ribosyl)glycinamide is bound by residues 20–21 (EL) and Glu-80. ATP contacts are provided by residues Arg-112, Lys-153, 158-163 (SSGKGQ), 193-196 (EGFI), and Glu-201. The 190-residue stretch at 117–306 (RLAAEELDLS…EFALHVRAFT (190 aa)) folds into the ATP-grasp domain. Glu-265 and Glu-277 together coordinate Mg(2+). N(1)-(5-phospho-beta-D-ribosyl)glycinamide is bound by residues Asp-284, Lys-354, and 361 to 362 (RR).

This sequence belongs to the PurK/PurT family. As to quaternary structure, homodimer.

The catalysed reaction is N(1)-(5-phospho-beta-D-ribosyl)glycinamide + formate + ATP = N(2)-formyl-N(1)-(5-phospho-beta-D-ribosyl)glycinamide + ADP + phosphate + H(+). The protein operates within purine metabolism; IMP biosynthesis via de novo pathway; N(2)-formyl-N(1)-(5-phospho-D-ribosyl)glycinamide from N(1)-(5-phospho-D-ribosyl)glycinamide (formate route): step 1/1. Functionally, involved in the de novo purine biosynthesis. Catalyzes the transfer of formate to 5-phospho-ribosyl-glycinamide (GAR), producing 5-phospho-ribosyl-N-formylglycinamide (FGAR). Formate is provided by PurU via hydrolysis of 10-formyl-tetrahydrofolate. In Vibrio parahaemolyticus serotype O3:K6 (strain RIMD 2210633), this protein is Formate-dependent phosphoribosylglycinamide formyltransferase.